Consider the following 105-residue polypeptide: Small ribosomal subunit protein uS10 (105 aa).

This sequence belongs to the universal ribosomal protein uS10 family. As to quaternary structure, part of the 30S ribosomal subunit.

In terms of biological role, involved in the binding of tRNA to the ribosomes. The polypeptide is Small ribosomal subunit protein uS10 (Roseobacter denitrificans (strain ATCC 33942 / OCh 114) (Erythrobacter sp. (strain OCh 114))).